A 510-amino-acid polypeptide reads, in one-letter code: ETS translocation variant 5 (510 aa).

The disordered stretch occupies residues 131-208 (FKPLTPPTTP…QPLQMPKMMP (78 aa)). A compositionally biased stretch (low complexity) spans 161–174 (GHAPAAGPVQGVGP). Residues 175 to 185 (APAPHSLPEPG) are compositionally biased toward pro residues. Ser248 is subject to Phosphoserine. Lys350 participates in a covalent cross-link: Glycyl lysine isopeptide (Lys-Gly) (interchain with G-Cter in SUMO2). The segment at residues 368–448 (LQLWQFLVTL…AGERYVYKFV (81 aa)) is a DNA-binding region (ETS).

As to quaternary structure, interacts (via C-terminal) with ZMYM5 (via N-terminal 120 amino acid region). As to expression, ubiquitous.

Its subcellular location is the nucleus. Its function is as follows. Binds to DNA sequences containing the consensus nucleotide core sequence 5'-GGAA.-3'. The protein is ETS translocation variant 5 (ETV5) of Homo sapiens (Human).